A 298-amino-acid polypeptide reads, in one-letter code: MVDEILKLKKEKGYIILAHNYQIPELQDIADFVGDSLQLARKAMELSEKKILFLGVDFMAELVKILNPDKKVIVPDRSATCPMANHLTPEIIREYREKFPDVPVVLYVNSTSECKALADVICTSANAVEVVKKLDSSVVIFGPDRNLGEYVAEKTGKKVITIPENGHCPVHQFNAESIDAVRKKYPDAKVIVHPESPKPVRDKADYVGSTGQMEKIPEKDPSRIFVIGTEIGMIHKLKKKFPDREFVPLEMAVCVNMKKNTLENTLHALQTESFEVILPKEVIEKAKKPILRMFELMG.

Iminosuccinate contacts are provided by H19 and S36. A [4Fe-4S] cluster-binding site is contributed by C81. Residues Y107 to N109 and S124 contribute to the iminosuccinate site. [4Fe-4S] cluster is bound at residue C168. Iminosuccinate contacts are provided by residues H193–E195 and T210. C254 is a [4Fe-4S] cluster binding site.

It belongs to the quinolinate synthase family. Type 2 subfamily. The cofactor is [4Fe-4S] cluster.

The protein resides in the cytoplasm. The enzyme catalyses iminosuccinate + dihydroxyacetone phosphate = quinolinate + phosphate + 2 H2O + H(+). Its pathway is cofactor biosynthesis; NAD(+) biosynthesis; quinolinate from iminoaspartate: step 1/1. Its function is as follows. Catalyzes the condensation of iminoaspartate with dihydroxyacetone phosphate to form quinolinate. The sequence is that of Quinolinate synthase from Thermotoga sp. (strain RQ2).